Consider the following 421-residue polypeptide: Methionine aminopeptidase 2 (421 aa).

Residues 1-53 (MTDAEIENSPASDLKELNLENEGVEQQDQAKADESDPVESKKKKNKKKKKKKS) form a disordered region. The span at 28 to 40 (DQAKADESDPVES) shows a compositional bias: basic and acidic residues. Residue S35 is modified to Phosphoserine. The segment covering 41-53 (KKKKNKKKKKKKS) has biased composition (basic residues). Position 174 (H174) interacts with substrate. 3 residues coordinate a divalent metal cation: D194, D205, and H274. H282 is a binding site for substrate. E307 and E402 together coordinate a divalent metal cation.

The protein belongs to the peptidase M24A family. Methionine aminopeptidase eukaryotic type 2 subfamily. The cofactor is Co(2+). Requires Zn(2+) as cofactor. Mn(2+) is required as a cofactor. It depends on Fe(2+) as a cofactor.

Its subcellular location is the cytoplasm. It carries out the reaction Release of N-terminal amino acids, preferentially methionine, from peptides and arylamides.. In terms of biological role, cotranslationally removes the N-terminal methionine from nascent proteins. The N-terminal methionine is often cleaved when the second residue in the primary sequence is small and uncharged (Met-Ala-, Cys, Gly, Pro, Ser, Thr, or Val). The protein is Methionine aminopeptidase 2 of Saccharomyces cerevisiae (strain RM11-1a) (Baker's yeast).